The primary structure comprises 347 residues: uncharacterized protein (347 aa).

A signal peptide spans 1–21 (MNKKSLNIVVMFGILMILAFS).

It belongs to the bacterial solute-binding protein 1 family. WtpA subfamily.

This is an uncharacterized protein from Methanococcus maripaludis (strain C5 / ATCC BAA-1333).